Consider the following 68-residue polypeptide: Conotoxin TsMMSK-021 (68 aa).

The first 20 residues, 1-20 (MMSKLGVLLTICLLLFPLTA), serve as a signal peptide directing secretion. The propeptide occupies 21–50 (VPLDGDQHADRPADRMQDISSEQHPLFDPV). 3 disulfide bridges follow: cysteine 53/cysteine 66, cysteine 54/cysteine 62, and cysteine 58/cysteine 65. Proline 64 carries the post-translational modification 4-hydroxyproline.

It belongs to the conotoxin M superfamily. Expressed by the venom duct.

Its subcellular location is the secreted. This chain is Conotoxin TsMMSK-021, found in Conus tessulatus (Tessellate cone).